A 180-amino-acid polypeptide reads, in one-letter code: NAD(P)H-quinone oxidoreductase subunit I, chloroplastic (180 aa).

2 consecutive 4Fe-4S ferredoxin-type domains span residues Gly55–Arg84 and Leu95–Glu124. 8 residues coordinate [4Fe-4S] cluster: Cys64, Cys67, Cys70, Cys74, Cys104, Cys107, Cys110, and Cys114.

It belongs to the complex I 23 kDa subunit family. In terms of assembly, NDH is composed of at least 16 different subunits, 5 of which are encoded in the nucleus. Requires [4Fe-4S] cluster as cofactor.

The protein resides in the plastid. The protein localises to the chloroplast thylakoid membrane. It carries out the reaction a plastoquinone + NADH + (n+1) H(+)(in) = a plastoquinol + NAD(+) + n H(+)(out). It catalyses the reaction a plastoquinone + NADPH + (n+1) H(+)(in) = a plastoquinol + NADP(+) + n H(+)(out). Its function is as follows. NDH shuttles electrons from NAD(P)H:plastoquinone, via FMN and iron-sulfur (Fe-S) centers, to quinones in the photosynthetic chain and possibly in a chloroplast respiratory chain. The immediate electron acceptor for the enzyme in this species is believed to be plastoquinone. Couples the redox reaction to proton translocation, and thus conserves the redox energy in a proton gradient. This chain is NAD(P)H-quinone oxidoreductase subunit I, chloroplastic, found in Hordeum vulgare (Barley).